Here is a 727-residue protein sequence, read N- to C-terminus: MNQKLLKLENLLRFHTICRQVHSPSQRRLLAWCRHGFAPASSVWRDLLGARSWQTDMLIGSALHQHRLLVTKKEKRPPRSQLSPVKTKKEVEVWVGMTVEDLASAMAKDIDCVYEALLNTAIDVDSLEANSHLDEVWIKEVIKKAGMKLKWSKLKQERIRENKDAVRRPGTDPALLKPRSPVVTVMGHVDHGKTTLLDKLRETQVAAMEVGGITQHIGAFLVSLPSGEKITFLDTPGHAAFSAMRARGAQVTDIVVLVVAADDGVMKQTVESIQHAKDAEVPIILAINKCDKTDADPEKVKKELLAYDVVCEEYGGDVQAVHVSALTGDNLMALAEATIALAEILELKADPTGPVEGTVIESFTDKGRGPVTTAIIQRGTLRKGSILVAGKSWAKVRLIFDENGKILNEAYPSMPVGIIGWRDLPSAGDEILEVESEPRAREVIEWRKSEQKEEKGKDDLKIMEEKRREHQEAHRKAREKYGSLHWKERSYIKFLERKQQRPLKPKEKVERQSNVLPIIIKGDVDGSVEAILNLLDTYDASHECELELVHFGLGDISENDVTFAETFDGVIYGFNVEAGSAIQQSAAQKGVKIKLHKIIYHLIEDLQEELSSRLPHTLEEYPIGEASILATFTVTEGKKKIPVAGCRVQKGQLERHKKFKLIRNGQVIWKGSLTSLKHHKDDISVIKTGMDCGLSLDEEKVEFKPGDQVICYEENKVPTKTSWDPGF.

The N-terminal 29 residues, 1 to 29 (MNQKLLKLENLLRFHTICRQVHSPSQRRL), are a transit peptide targeting the mitochondrion. In terms of domain architecture, tr-type G spans 178–346 (PRSPVVTVMG…ATIALAEILE (169 aa)). The G1 stretch occupies residues 187–194 (GHVDHGKT). 187 to 194 (GHVDHGKT) lines the GTP pocket. The tract at residues 212–216 (GITQH) is G2. Residues 234–237 (DTPG) and 288–291 (NKCD) contribute to the GTP site. The G3 stretch occupies residues 234–237 (DTPG). A G4 region spans residues 288-291 (NKCD). Residues 324–326 (SAL) form a G5 region. A Phosphothreonine modification is found at T688.

Belongs to the TRAFAC class translation factor GTPase superfamily. Classic translation factor GTPase family. IF-2 subfamily. Monomer.

The protein resides in the mitochondrion. Its function is as follows. One of the essential components for the initiation of protein synthesis. Protects formylmethionyl-tRNA from spontaneous hydrolysis and promotes its binding to the 30S ribosomal subunits. Also involved in the hydrolysis of GTP during the formation of the 70S ribosomal complex. This is Translation initiation factor IF-2, mitochondrial (Mtif2) from Mus musculus (Mouse).